The primary structure comprises 242 residues: Histone-lysine N-methyltransferase set-1 (242 aa).

Positions 1-61 are disordered; it reads MKVAAKKLAT…TRSRKGVSVK (61 aa). A compositionally biased stretch (low complexity) spans 30 to 43; the sequence is SENPSSLASHSSSS. One can recognise an SET domain in the interval 104-226; that stretch reads RLLEVYKDVV…QGEELLYDYG (123 aa). Residues 114-116, Tyr159, and 186-187 each bind S-adenosyl-L-methionine; these read KGR and NH.

It belongs to the class V-like SAM-binding methyltransferase superfamily. Histone-lysine methyltransferase family. PR/SET subfamily. As to expression, in embryos, it is expressed ubiquitously. In late embryos, it is expressed in hypodermal seam cells. In L3 and L4 larvae and thereafter, it is expressed in vulval precursor cells. In adult males, it is also expressed in 6 unidentified posterior cells.

Its subcellular location is the nucleus. It is found in the chromosome. The enzyme catalyses L-lysyl(20)-[histone H4] + S-adenosyl-L-methionine = N(6)-methyl-L-lysyl(20)-[histone H4] + S-adenosyl-L-homocysteine + H(+). In terms of biological role, histone methyltransferase that specifically monomethylates 'Lys-20' of histone H4 (H4K20me1). H4K20me1 is enriched on hermaphrodite X chromosomes and during mitosis. Involved in dosage compensation by repression of X-linked gene expression in hermaphrodites. Plays a role in growth and body fat regulation downstream of the TOR complex 2 pathway. The polypeptide is Histone-lysine N-methyltransferase set-1 (set-1) (Caenorhabditis elegans).